Consider the following 199-residue polypeptide: MEYYAVPIAKLVEEFQKLPGIGHKSAQRLAFHVINLPMEKVQKLSESILEAKQKTRYCSVCSNLTDIDPCPLCSGTSRDKTVICVVQDPRDVVAMERTREFKGLYHVLHGAISPMQGIGPEEIRIKELITRLGSGDVKEVILATNPNVEGEATAMYISKLIKPLGVKATRIAHGIPVGGDLEYADEVTLAKALEGRREI.

Residues 58–73 form a C4-type zinc finger; it reads CSVCSNLTDIDPCPLC. Residues 81 to 176 form the Toprim domain; the sequence is TVICVVQDPR…KATRIAHGIP (96 aa).

It belongs to the RecR family.

In terms of biological role, may play a role in DNA repair. It seems to be involved in an RecBC-independent recombinational process of DNA repair. It may act with RecF and RecO. In Ruminiclostridium cellulolyticum (strain ATCC 35319 / DSM 5812 / JCM 6584 / H10) (Clostridium cellulolyticum), this protein is Recombination protein RecR.